Reading from the N-terminus, the 223-residue chain is Transmembrane protein 126 (223 aa).

Residues 1-39 are Mitochondrial matrix-facing; sequence MALSRAKPDELPRDAVVITEDQALKYQWKIITSWDKIGE. A helical membrane pass occupies residues 40-62; sequence VWSLRYTPGILSALAAGTGAYIN. Residues 63–78 are Mitochondrial intermembrane-facing; it reads NHYRTKLRLGGHGRLS. A helical transmembrane segment spans residues 79-99; that stretch reads TYLPIVAVPAIFTMLAHKFFI. Over 100-123 the chain is Mitochondrial matrix; sequence QRPILLNPLGECPVCIQMRSAAFQ. The chain crosses the membrane as a helical span at residues 124 to 144; the sequence is TSLGIVYPTILAPFAAFLFAT. The Mitochondrial intermembrane segment spans residues 145–171; sequence RCYTYRIPSITENPREVFLLWRKFTRP. Residues 172-192 form a helical membrane-spanning segment; sequence IVPALGTLIGLQALLTMFLTG. Residues 193–223 are Mitochondrial matrix-facing; sequence QEDKQNFKLMLRMREIEHQVEEEHLPQRMDF.

It belongs to the TMEM126 family. Associates with mitochondrial complex I assembly intermediates during its biogenesis.

Its subcellular location is the mitochondrion membrane. Functionally, as part of the MCIA complex, involved in the assembly of the mitochondrial complex I. The polypeptide is Transmembrane protein 126 (Drosophila melanogaster (Fruit fly)).